A 556-amino-acid polypeptide reads, in one-letter code: uncharacterized protein (556 aa).

Disordered regions lie at residues 1–40 (MSNSDKNNNNNTNNNNNNNNNNNGNFGIWEEPDDDSTNEN), 80–243 (NTTQ…KQSW), 278–324 (YDSD…SSLP), 363–391 (RTKQIKKVQQQQQQSSKSKPNNNNNKFVD), and 422–525 (DSKQ…ENSA). Residues 7-25 (NNNNNTNNNNNNNNNNNGN) show a composition bias toward low complexity. The span at 30–40 (EEPDDDSTNEN) shows a compositional bias: acidic residues. 2 stretches are compositionally biased toward low complexity: residues 80–133 (NTTQ…GTRS) and 164–181 (NDNNDNKNNNKNNNNDSN). Residues 182–192 (IVDDDEDEEEF) show a composition bias toward acidic residues. Residues 207 to 226 (STSSPSSTSSPIVSPQTQTS) are compositionally biased toward low complexity. Positions 227-243 (KLESSMDVSPSSGKQSW) are enriched in polar residues. Low complexity-rich tracts occupy residues 292-322 (NNSSTTTNNNNNNNNNTTTTTTTTTTTNSSS), 369-388 (KVQQQQQQSSKSKPNNNNNK), and 425-525 (QQNV…ENSA). A helical membrane pass occupies residues 528–548 (GSFIKNAVIFIFILLLMVVGF).

It localises to the membrane. This is an uncharacterized protein from Dictyostelium discoideum (Social amoeba).